The following is a 153-amino-acid chain: 3-hydroxyacyl-[acyl-carrier-protein] dehydratase FabZ (153 aa).

The active site involves His57.

Belongs to the thioester dehydratase family. FabZ subfamily.

The protein localises to the cytoplasm. It catalyses the reaction a (3R)-hydroxyacyl-[ACP] = a (2E)-enoyl-[ACP] + H2O. Functionally, involved in unsaturated fatty acids biosynthesis. Catalyzes the dehydration of short chain beta-hydroxyacyl-ACPs and long chain saturated and unsaturated beta-hydroxyacyl-ACPs. The sequence is that of 3-hydroxyacyl-[acyl-carrier-protein] dehydratase FabZ from Aeromonas hydrophila subsp. hydrophila (strain ATCC 7966 / DSM 30187 / BCRC 13018 / CCUG 14551 / JCM 1027 / KCTC 2358 / NCIMB 9240 / NCTC 8049).